The following is a 332-amino-acid chain: Glycerol-3-phosphate dehydrogenase [NAD(P)+] (332 aa).

NADPH is bound by residues Trp-13, Lys-34, and Lys-108. 3 residues coordinate sn-glycerol 3-phosphate: Lys-108, Gly-136, and Ser-138. Position 140 (Ala-140) interacts with NADPH. Positions 191, 244, 254, 255, and 256 each coordinate sn-glycerol 3-phosphate. The active-site Proton acceptor is the Lys-191. Arg-255 lines the NADPH pocket. Residues Val-279 and Glu-281 each contribute to the NADPH site.

It belongs to the NAD-dependent glycerol-3-phosphate dehydrogenase family.

The protein localises to the cytoplasm. The catalysed reaction is sn-glycerol 3-phosphate + NAD(+) = dihydroxyacetone phosphate + NADH + H(+). The enzyme catalyses sn-glycerol 3-phosphate + NADP(+) = dihydroxyacetone phosphate + NADPH + H(+). It functions in the pathway membrane lipid metabolism; glycerophospholipid metabolism. In terms of biological role, catalyzes the reduction of the glycolytic intermediate dihydroxyacetone phosphate (DHAP) to sn-glycerol 3-phosphate (G3P), the key precursor for phospholipid synthesis. This Francisella tularensis subsp. novicida (strain U112) protein is Glycerol-3-phosphate dehydrogenase [NAD(P)+].